Here is a 397-residue protein sequence, read N- to C-terminus: Protein Mx1 (397 aa).

The protein belongs to the TRAFAC class dynamin-like GTPase superfamily. Dynamin/Fzo/YdjA family.

This Mus musculus (Mouse) protein is Protein Mx1 (Mx1).